A 53-amino-acid chain; its full sequence is 20 kDa chaperonin (53 aa).

Cpn-10 domain stretches follow at residues 1-10 (YTSIKPLGDR) and 11-53 (VAEA…KITP).

Belongs to the GroES chaperonin family. Forms stable complexes with cpn60 in the presence of ATP. Homotetramer.

The protein resides in the plastid. The protein localises to the chloroplast. Seems to function only as a co-chaperone, along with cpn60, and in certain cases is essential for the discharge of biologically active proteins from cpn60. The chain is 20 kDa chaperonin from Populus euphratica (Euphrates poplar).